The sequence spans 473 residues: MNWEMVIGLEVHIQLSTKSKLFSTSATKYGQHQNTQAAFLDLGLPGTLPVVNKEAIRKAVIFGLAVDAKISKDSFFARKNYFYPDLSKGYQISQSTNPIVQEGRLEIETSKGLKTIRIERAHLEEDAGKSVHGYIAGETGLDYNRAGTPLLEIVTYPDFRSAEEVVAYLKKLHQLVKHLGICDGNMQEGSFRCDVNLSIRPQGQAKFGTRAELKNINSFRFIDKAIEYEYARQVSVLESGGEVVQETRLYDADANETRSMRAKEDAFDYRYFPDPDLLPLVITDEYIESIKKQMPLKSEEREAVYREHLAEQEVEFLLSNLEIADYYDKVAVVIGYKPAYNWITVDLISTLNRAEKEFSSDVVPAEILLEIIANVQKDIISQANAKKVIAEYIDAPSAIEAIIEKLGLKQVSDEGMIRELVQGIIAANPQQAADFKAGKTKLMSFFVGQAMKASKGKANPKQVNQIVQEELNK.

Belongs to the GatB/GatE family. GatB subfamily. In terms of assembly, heterotrimer of A, B and C subunits.

It carries out the reaction L-glutamyl-tRNA(Gln) + L-glutamine + ATP + H2O = L-glutaminyl-tRNA(Gln) + L-glutamate + ADP + phosphate + H(+). The enzyme catalyses L-aspartyl-tRNA(Asn) + L-glutamine + ATP + H2O = L-asparaginyl-tRNA(Asn) + L-glutamate + ADP + phosphate + 2 H(+). In terms of biological role, allows the formation of correctly charged Asn-tRNA(Asn) or Gln-tRNA(Gln) through the transamidation of misacylated Asp-tRNA(Asn) or Glu-tRNA(Gln) in organisms which lack either or both of asparaginyl-tRNA or glutaminyl-tRNA synthetases. The reaction takes place in the presence of glutamine and ATP through an activated phospho-Asp-tRNA(Asn) or phospho-Glu-tRNA(Gln). This is Aspartyl/glutamyl-tRNA(Asn/Gln) amidotransferase subunit B from Francisella tularensis subsp. tularensis (strain FSC 198).